Consider the following 214-residue polypeptide: Adenylate kinase (214 aa).

10–15 (GSGKGT) is a binding site for ATP. The tract at residues 30–59 (STGDMLRAAVREGTPLGMEAKKIMDAGQLV) is NMP. Residues threonine 31, arginine 36, 57–59 (QLV), 85–88 (GFPR), and glutamine 92 each bind AMP. The LID stretch occupies residues 122–159 (GRRVHPASGRTYHVVFNPPKVEGRDDETGEPLVQREDD). ATP contacts are provided by residues arginine 123 and 132-133 (TY). Residues arginine 156 and arginine 167 each coordinate AMP. Glycine 200 is a binding site for ATP.

It belongs to the adenylate kinase family. Monomer.

It is found in the cytoplasm. The catalysed reaction is AMP + ATP = 2 ADP. It functions in the pathway purine metabolism; AMP biosynthesis via salvage pathway; AMP from ADP: step 1/1. Functionally, catalyzes the reversible transfer of the terminal phosphate group between ATP and AMP. Plays an important role in cellular energy homeostasis and in adenine nucleotide metabolism. The protein is Adenylate kinase of Methylococcus capsulatus (strain ATCC 33009 / NCIMB 11132 / Bath).